The following is a 218-amino-acid chain: Thiopurine S-methyltransferase (218 aa).

4 residues coordinate S-adenosyl-L-methionine: Trp10, Leu45, Glu66, and Arg123.

Belongs to the class I-like SAM-binding methyltransferase superfamily. TPMT family.

The protein localises to the cytoplasm. It catalyses the reaction S-adenosyl-L-methionine + a thiopurine = S-adenosyl-L-homocysteine + a thiopurine S-methylether.. This Azotobacter vinelandii (strain DJ / ATCC BAA-1303) protein is Thiopurine S-methyltransferase.